Here is a 268-residue protein sequence, read N- to C-terminus: 4-hydroxy-tetrahydrodipicolinate reductase (268 aa).

An NAD(+)-binding site is contributed by 9 to 14; sequence GCSGRM. Residue R36 participates in NADP(+) binding. Residues 98-100 and 122-125 each bind NAD(+); these read GTT and APNT. The Proton donor/acceptor role is filled by H155. A (S)-2,3,4,5-tetrahydrodipicolinate-binding site is contributed by H156. K159 acts as the Proton donor in catalysis. 165–166 contacts (S)-2,3,4,5-tetrahydrodipicolinate; it reads GT.

The protein belongs to the DapB family.

Its subcellular location is the cytoplasm. It carries out the reaction (S)-2,3,4,5-tetrahydrodipicolinate + NAD(+) + H2O = (2S,4S)-4-hydroxy-2,3,4,5-tetrahydrodipicolinate + NADH + H(+). The enzyme catalyses (S)-2,3,4,5-tetrahydrodipicolinate + NADP(+) + H2O = (2S,4S)-4-hydroxy-2,3,4,5-tetrahydrodipicolinate + NADPH + H(+). It functions in the pathway amino-acid biosynthesis; L-lysine biosynthesis via DAP pathway; (S)-tetrahydrodipicolinate from L-aspartate: step 4/4. Its function is as follows. Catalyzes the conversion of 4-hydroxy-tetrahydrodipicolinate (HTPA) to tetrahydrodipicolinate. In Colwellia psychrerythraea (strain 34H / ATCC BAA-681) (Vibrio psychroerythus), this protein is 4-hydroxy-tetrahydrodipicolinate reductase.